The sequence spans 103 residues: MAAVSLSVSTVKPLGDRVFIKVSESEEKTAGGILLPDTAKEKPQVGEVAQVGPGKRNDDGSRQAPEVGVGDKVLYSKYAGTDIKLGSDEYVLLSEKDILAVVN.

The protein belongs to the GroES chaperonin family. In terms of assembly, heptamer of 7 subunits arranged in a ring. Interacts with the chaperonin GroEL.

Its subcellular location is the cytoplasm. Functionally, together with the chaperonin GroEL, plays an essential role in assisting protein folding. The GroEL-GroES system forms a nano-cage that allows encapsulation of the non-native substrate proteins and provides a physical environment optimized to promote and accelerate protein folding. GroES binds to the apical surface of the GroEL ring, thereby capping the opening of the GroEL channel. The protein is Co-chaperonin GroES of Prochlorococcus marinus (strain SARG / CCMP1375 / SS120).